Here is a 219-residue protein sequence, read N- to C-terminus: Thiamine-phosphate synthase (219 aa).

4-amino-2-methyl-5-(diphosphooxymethyl)pyrimidine contacts are provided by residues 44–48 and asparagine 79; that span reads QFREK. Residues aspartate 80 and aspartate 99 each coordinate Mg(2+). Serine 117 contacts 4-amino-2-methyl-5-(diphosphooxymethyl)pyrimidine. A 2-[(2R,5Z)-2-carboxy-4-methylthiazol-5(2H)-ylidene]ethyl phosphate-binding site is contributed by 143 to 145; it reads TST. Residue lysine 146 participates in 4-amino-2-methyl-5-(diphosphooxymethyl)pyrimidine binding. 2-[(2R,5Z)-2-carboxy-4-methylthiazol-5(2H)-ylidene]ethyl phosphate-binding positions include glycine 175 and 195 to 196; that span reads IS.

Belongs to the thiamine-phosphate synthase family. Mg(2+) is required as a cofactor.

It catalyses the reaction 2-[(2R,5Z)-2-carboxy-4-methylthiazol-5(2H)-ylidene]ethyl phosphate + 4-amino-2-methyl-5-(diphosphooxymethyl)pyrimidine + 2 H(+) = thiamine phosphate + CO2 + diphosphate. It carries out the reaction 2-(2-carboxy-4-methylthiazol-5-yl)ethyl phosphate + 4-amino-2-methyl-5-(diphosphooxymethyl)pyrimidine + 2 H(+) = thiamine phosphate + CO2 + diphosphate. The enzyme catalyses 4-methyl-5-(2-phosphooxyethyl)-thiazole + 4-amino-2-methyl-5-(diphosphooxymethyl)pyrimidine + H(+) = thiamine phosphate + diphosphate. It functions in the pathway cofactor biosynthesis; thiamine diphosphate biosynthesis; thiamine phosphate from 4-amino-2-methyl-5-diphosphomethylpyrimidine and 4-methyl-5-(2-phosphoethyl)-thiazole: step 1/1. Functionally, condenses 4-methyl-5-(beta-hydroxyethyl)thiazole monophosphate (THZ-P) and 2-methyl-4-amino-5-hydroxymethyl pyrimidine pyrophosphate (HMP-PP) to form thiamine monophosphate (TMP). The sequence is that of Thiamine-phosphate synthase from Bacillus cereus (strain 03BB102).